Here is a 256-residue protein sequence, read N- to C-terminus: Hypodermin-A (256 aa).

Residues 1–22 form the signal peptide; the sequence is MLKFVILLCSIAYVFGAVVPLG. Residues 23–30 constitute a propeptide, activation peptide; the sequence is MLSQSDGR. A Peptidase S1 domain is found at 31-254; it reads IVGGVESKIE…VRSLIVSNAE (224 aa). A disulfide bridge links Cys56 with Cys72. Active-site charge relay system residues include His71 and Asp116. Intrachain disulfides connect Cys180–Cys197 and Cys206–Cys230. The active-site Charge relay system is the Ser210.

Belongs to the peptidase S1 family.

Its subcellular location is the secreted. Functionally, specificity, limited to carboxyl side of arginine residue in B-chain of insulin. The protein is Hypodermin-A of Hypoderma lineatum (Early cattle grub).